Reading from the N-terminus, the 237-residue chain is GCN5-related N-acetyltransferase 3, chloroplastic (237 aa).

Residues 1-93 (MGLVGCVGKS…RAISRSDVIV (93 aa)) constitute a chloroplast transit peptide. The region spanning 94-237 (SVFCKPQHVD…TMMFTKSLEA (144 aa)) is the N-acetyltransferase domain. Acetyl-CoA-binding positions include 171–173 (LMV), 179–184 (RMGIGK), 207–209 (FED), and F214.

It belongs to the acetyltransferase family. GNAT subfamily. As to quaternary structure, oligomer. Autoacetylated. Expressed in green tissues.

Its subcellular location is the plastid. The protein localises to the chloroplast. The catalysed reaction is an N-terminal L-alpha-aminoacyl-[protein] + acetyl-CoA = N-terminal N(alpha)-acetyl-L-alpha-aminoacyl-[protein] + CoA + H(+). It catalyses the reaction L-lysyl-[protein] + acetyl-CoA = N(6)-acetyl-L-lysyl-[protein] + CoA + H(+). In terms of biological role, protein acetyltransferase with dual specificity triggering both N-alpha-acetylation (NTA) and epsilon-lysine acetylation (KA), possibly with a low efficiency or toward specific plastid substrates. The protein is GCN5-related N-acetyltransferase 3, chloroplastic of Arabidopsis thaliana (Mouse-ear cress).